The primary structure comprises 1200 residues: Chromosome partition protein Smc (1200 aa).

33–40 is an ATP binding site; it reads PNGSGKSN. Positions 90–109 are disordered; that stretch reads GENLSEPGANHNGNGNGAKI. The stretch at 202 to 528 forms a coiled coil; the sequence is EVQDREERCQ…AASQAQQEVQ (327 aa). The SMC hinge domain maps to 542–656; it reads PGVCGLVAQL…VFDTLVNARN (115 aa). Positions 692–1046 form a coiled coil; the sequence is TMVSEDTAEV…ERTELLLRIE (355 aa).

Belongs to the SMC family. In terms of assembly, homodimer.

The protein resides in the cytoplasm. Functionally, required for chromosome condensation and partitioning. The polypeptide is Chromosome partition protein Smc (Synechocystis sp. (strain ATCC 27184 / PCC 6803 / Kazusa)).